The chain runs to 130 residues: Small ribosomal subunit protein uS9 (130 aa).

The protein belongs to the universal ribosomal protein uS9 family.

The protein is Small ribosomal subunit protein uS9 of Teredinibacter turnerae (strain ATCC 39867 / T7901).